We begin with the raw amino-acid sequence, 355 residues long: UDP-N-acetylglucosamine--N-acetylmuramyl-(pentapeptide) pyrophosphoryl-undecaprenol N-acetylglucosamine transferase (355 aa).

Residues 15–17 (TGG), N127, R163, S191, I244, 263–268 (ALTVSE), and Q288 contribute to the UDP-N-acetyl-alpha-D-glucosamine site.

Belongs to the glycosyltransferase 28 family. MurG subfamily.

The protein localises to the cell inner membrane. The enzyme catalyses di-trans,octa-cis-undecaprenyl diphospho-N-acetyl-alpha-D-muramoyl-L-alanyl-D-glutamyl-meso-2,6-diaminopimeloyl-D-alanyl-D-alanine + UDP-N-acetyl-alpha-D-glucosamine = di-trans,octa-cis-undecaprenyl diphospho-[N-acetyl-alpha-D-glucosaminyl-(1-&gt;4)]-N-acetyl-alpha-D-muramoyl-L-alanyl-D-glutamyl-meso-2,6-diaminopimeloyl-D-alanyl-D-alanine + UDP + H(+). It functions in the pathway cell wall biogenesis; peptidoglycan biosynthesis. Cell wall formation. Catalyzes the transfer of a GlcNAc subunit on undecaprenyl-pyrophosphoryl-MurNAc-pentapeptide (lipid intermediate I) to form undecaprenyl-pyrophosphoryl-MurNAc-(pentapeptide)GlcNAc (lipid intermediate II). This chain is UDP-N-acetylglucosamine--N-acetylmuramyl-(pentapeptide) pyrophosphoryl-undecaprenol N-acetylglucosamine transferase, found in Escherichia coli O139:H28 (strain E24377A / ETEC).